Reading from the N-terminus, the 388-residue chain is Processive diacylglycerol beta-glucosyltransferase (388 aa).

Belongs to the glycosyltransferase 28 family. UgtP subfamily.

The protein localises to the cell membrane. The enzyme catalyses a 1,2-diacyl-3-O-(beta-D-glucopyranosyl)-sn-glycerol + UDP-alpha-D-glucose = a 1,2-diacyl-3-O-(beta-D-Glc-(1-&gt;6)-beta-D-Glc)-sn-glycerol + UDP + H(+). It carries out the reaction a 1,2-diacyl-3-O-(beta-D-Glc-(1-&gt;6)-beta-D-Glc)-sn-glycerol + UDP-alpha-D-glucose = a 1,2-diacyl-3-O-(beta-D-Glc-(1-&gt;6)-beta-D-Glc-(1-&gt;6)-beta-D-Glc)-sn-glycerol + UDP + H(+). It catalyses the reaction a 1,2-diacyl-sn-glycerol + UDP-alpha-D-glucose = a 1,2-diacyl-3-O-(beta-D-glucopyranosyl)-sn-glycerol + UDP + H(+). Its pathway is glycolipid metabolism; diglucosyl-diacylglycerol biosynthesis. Processive glucosyltransferase involved in the biosynthesis of both the bilayer- and non-bilayer-forming membrane glucolipids. Is able to successively transfer up to three glucosyl residues to diacylglycerol (DAG), thereby catalyzing the formation of beta-monoglucosyl-DAG (3-O-(beta-D-glucopyranosyl)-1,2-diacyl-sn-glycerol), beta-diglucosyl-DAG (3-O-(beta-D-glucopyranosyl-beta-(1-&gt;6)-D-glucopyranosyl)-1,2-diacyl-sn-glycerol) and beta-triglucosyl-DAG (3-O-(beta-D-glucopyranosyl-beta-(1-&gt;6)-D-glucopyranosyl-beta-(1-&gt;6)-D-glucopyranosyl)-1,2-diacyl-sn-glycerol). Beta-diglucosyl-DAG is the predominant glycolipid found in Bacillales and is also used as a membrane anchor for lipoteichoic acid (LTA). The chain is Processive diacylglycerol beta-glucosyltransferase from Bacillus mycoides (strain KBAB4) (Bacillus weihenstephanensis).